The chain runs to 201 residues: Imidazole glycerol phosphate synthase subunit HisH (201 aa).

The 200-residue stretch at 2 to 201 (KVVILDTGCA…ARLLKNFLEM (200 aa)) folds into the Glutamine amidotransferase type-1 domain. The active-site Nucleophile is the Cys-77. Active-site residues include His-183 and Glu-185.

In terms of assembly, heterodimer of HisH and HisF.

It localises to the cytoplasm. It carries out the reaction 5-[(5-phospho-1-deoxy-D-ribulos-1-ylimino)methylamino]-1-(5-phospho-beta-D-ribosyl)imidazole-4-carboxamide + L-glutamine = D-erythro-1-(imidazol-4-yl)glycerol 3-phosphate + 5-amino-1-(5-phospho-beta-D-ribosyl)imidazole-4-carboxamide + L-glutamate + H(+). It catalyses the reaction L-glutamine + H2O = L-glutamate + NH4(+). Its pathway is amino-acid biosynthesis; L-histidine biosynthesis; L-histidine from 5-phospho-alpha-D-ribose 1-diphosphate: step 5/9. Functionally, IGPS catalyzes the conversion of PRFAR and glutamine to IGP, AICAR and glutamate. The HisH subunit catalyzes the hydrolysis of glutamine to glutamate and ammonia as part of the synthesis of IGP and AICAR. The resulting ammonia molecule is channeled to the active site of HisF. The chain is Imidazole glycerol phosphate synthase subunit HisH from Photorhabdus laumondii subsp. laumondii (strain DSM 15139 / CIP 105565 / TT01) (Photorhabdus luminescens subsp. laumondii).